The primary structure comprises 243 residues: Vimentin A2 (243 aa).

The coil 1B stretch occupies residues 1 to 22; the sequence is GFSLQDELDFLKKLHDEELADV. The region spanning 1 to 188 is the IF rod domain; it reads GFSLQDELDF…KLLEGEESRI (188 aa). Positions 23–45 are linker 12; it reads QAQIQDQQVQVDMDMAKPDLTAA. Residues 46 to 184 are coil 2; it reads LRDVRLQYEN…ATYRKLLEGE (139 aa). The tail stretch occupies residues 185–243; the sequence is ESRITTPLPNLSSFNLRDAILETKPILENTFSKKVLIKTIETRDGEVINESTQNHDDLE.

This sequence belongs to the intermediate filament family. In terms of assembly, homomer. In terms of processing, one of the most prominent phosphoproteins in various cells of mesenchymal origin. Phosphorylation is enhanced during cell division, at which time vimentin filaments are significantly reorganized. Expressed in low amounts in retina, optic nerve, and brain and in higher amounts in spinal cord.

Its function is as follows. Vimentins are class-III intermediate filaments found in various non-epithelial cells, especially mesenchymal cells. Vimentin is attached to the nucleus, endoplasmic reticulum, and mitochondria, either laterally or terminally. The polypeptide is Vimentin A2 (Carassius auratus (Goldfish)).